Reading from the N-terminus, the 76-residue chain is Omega-agatoxin-Aa3b (76 aa).

Disulfide bonds link C2–C19, C9–C25, C16–C52, C18–C40, C27–C38, and C59–C67.

It belongs to the neurotoxin 04 (omega-agtx) family. 03 (type II/III omega-agtx) subfamily. In terms of tissue distribution, expressed by the venom gland.

It is found in the secreted. In terms of biological role, omega-agatoxins are antagonists of voltage-gated calcium channels. This toxin blocks calcium channels in insect central neurons but not at peripheral neuromuscular junctions. In vertebrates, it is broadly active against all high-threshold Cav1/CACNA1 channels and Cav2.2/CACNA1B channels. The polypeptide is Omega-agatoxin-Aa3b (Agelenopsis aperta (North American funnel-web spider)).